A 485-amino-acid polypeptide reads, in one-letter code: Aerolysin-5 (485 aa).

A signal peptide spans 1-23; the sequence is MQKLKITGLSLIISGLLMAQRHA. Disulfide bonds link C42-C98 and C182-C187. Positions 68-84 are interaction with host N-linked glycan; the sequence is WQISGLANGWVIMGPVY. The segment at 256–288 is part of the transmembrane beta-barrel after proteolytic activation of the toxin and insertion into the host membrane; that stretch reads YGLSEKVTTKNKFKWPLVGETELSIEIAANQSW. Residues 346 to 355 form an interaction with glycans from host GPI-anchor region; that stretch reads RWGGNAWYTH. A propeptide spanning residues 446–485 is cleaved from the precursor; that stretch reads AADGKAPRALSARRGEQGLRLAIPLECRKSSPGLASATSA.

Belongs to the aerolysin family. As to quaternary structure, homodimer in solution; homoheptamer in the host membrane. After binding to GPI-anchored proteins in target membranes and proteolytic removal of the C-terminal propeptide, the protein assembles into a heptameric pre-pore complex. A further conformation change leads to insertion into the host membrane. In terms of processing, proteolytic cleavage and subsequent release of the propeptide trigger a major conformation change, leading to the formation of a heptameric pre-pore that then inserts into the host membrane.

The protein resides in the secreted. It is found in the host cell membrane. Secreted, cytolytic toxin that forms pores in host membranes after proteolytic removal of a C-terminal propeptide, leading to destruction of the membrane permeability barrier and cell death. The pores are formed by transmembrane beta-strands and are approximately 3 nm in diameter. In Aeromonas hydrophila, this protein is Aerolysin-5 (ahh5).